The sequence spans 121 residues: Large ribosomal subunit protein bL12 (121 aa).

It belongs to the bacterial ribosomal protein bL12 family. In terms of assembly, homodimer. Part of the ribosomal stalk of the 50S ribosomal subunit. Forms a multimeric L10(L12)X complex, where L10 forms an elongated spine to which 2 to 4 L12 dimers bind in a sequential fashion. Binds GTP-bound translation factors.

Functionally, forms part of the ribosomal stalk which helps the ribosome interact with GTP-bound translation factors. Is thus essential for accurate translation. This Pectobacterium carotovorum subsp. carotovorum (strain PC1) protein is Large ribosomal subunit protein bL12.